The chain runs to 361 residues: MDPLGAAKPQWPWRRCLAALLFQLLVAVCFFSYLRVSRDDATGSPRAPSGSSRQDTTPTRPTLLILLRTWPFHIPVALSRCSEMVPGTADCHITADRKVYPQADMVIVHHWDIMSNPKSRLPPSPRPQGQRWIWFNLEPPPNCQHLEALDRYFNLTMSYRSDSDIFTPYGWLEPWSGQPAHPPLNLSAKTELVAWAVSNWKPDSARVRYYQSLQAHLKVDVYGRSHKPLPKGTMMETLSRYKFYLAFENSLHPDYITEKLWRNALEAWAVPVVLGPSRSNYERFLPPDAFIHVDDFQSPKDLARYLQELDKDHARYLSYFRWRETLRPRSFSWALDFCKACWKLQQESRYQTVRSIAAWFT.

The Cytoplasmic segment spans residues 1–15 (MDPLGAAKPQWPWRR). The chain crosses the membrane as a helical; Signal-anchor for type II membrane protein span at residues 16–34 (CLAALLFQLLVAVCFFSYL). The Lumenal portion of the chain corresponds to 35–361 (RVSRDDATGS…TVRSIAAWFT (327 aa)). Residues 39–58 (DDATGSPRAPSGSSRQDTTP) are disordered. N-linked (GlcNAc...) asparagine glycosylation is found at asparagine 154 and asparagine 185.

It belongs to the glycosyltransferase 10 family. Post-translationally, glycosylated. In terms of tissue distribution, highly expressed in stomach, colon, small intestine, lung and kidney and to a lesser extent in salivary gland, bladder, uterus and liver.

It localises to the golgi apparatus. Its subcellular location is the golgi stack membrane. The catalysed reaction is a beta-D-galactosyl-(1-&gt;3)-N-acetyl-beta-D-glucosaminyl derivative + GDP-beta-L-fucose = a beta-D-galactosyl-(1-&gt;3)-[alpha-L-fucosyl-(1-&gt;4)]-N-acetyl-beta-D-glucosaminyl derivative + GDP + H(+). It catalyses the reaction an N-acetyl-alpha-neuraminyl-(2-&gt;3)-beta-D-galactosyl-(1-&gt;4)-N-acetyl-beta-D-glucosaminyl derivative + GDP-beta-L-fucose = an alpha-Neu5Ac-(2-&gt;3)-beta-D-Gal-(1-&gt;4)-[alpha-L-Fuc-(1-&gt;3)]-beta-D-GlcNAc derivative + GDP + H(+). It carries out the reaction a beta-D-galactosyl-(1-&gt;4)-N-acetyl-beta-D-glucosaminyl derivative + GDP-beta-L-fucose = a beta-D-galactosyl-(1-&gt;4)-[alpha-L-fucosyl-(1-&gt;3)]-N-acetyl-beta-D-glucosaminyl derivative + GDP + H(+). The enzyme catalyses an alpha-Neu5Ac-(2-&gt;3)-beta-D-Gal-(1-&gt;4)-beta-D-GlcNAc-(1-&gt;3)-beta-D-Gal-(1-&gt;4)-[alpha-L-Fuc-(1-&gt;3)]-beta-D-GlcNAc derivative + GDP-beta-L-fucose = an alpha-Neu5Ac-(2-&gt;3)-beta-D-Gal-(1-&gt;4)-[alpha-L-Fuc-(1-&gt;3)]-beta-D-GlcNAc-(1-&gt;3)-beta-D-Gal-(1-&gt;4)-[alpha-L-Fuc-(1-&gt;3)]-beta-D-GlcNAc derivative + GDP + H(+). The catalysed reaction is Lc4Cer + GDP-beta-L-fucose = a lactoside III(4)-a-Fuc-Lc4Cer + GDP + H(+). It catalyses the reaction a beta-D-Gal-(1-&gt;3)-beta-D-GlcNAc-(1-&gt;3)-beta-D-Gal-(1-&gt;4)-beta-D-Glc-(1&lt;-&gt;1')-Cer(d18:1(4E)) + GDP-beta-L-fucose = a III(4)-a-Fuc-Lc4Cer(d18:1(4E)) + GDP + H(+). It carries out the reaction N-acetyl-alpha-neuraminosyl-(2-&gt;3)-beta-D-galactosyl-(1-&gt;3)-[N-acetyl-alpha-neuraminosyl-(2-&gt;6)]-N-acetyl-beta-D-glucosaminyl-(1-&gt;3)-beta-D-galactosyl-(1-&gt;4)-beta-D-glucosyl-(1&lt;-&gt;1')-N-acyl-sphing-4-enine + GDP-beta-L-fucose = N-acetyl-alpha-neuraminosyl-(2-&gt;3)-beta-D-galactosyl-(1-&gt;3)-alpha-L-fucosyl-(1-&gt;4)-[N-acetyl-alpha-neuraminosyl-(2-&gt;6)-N-acetyl-beta-D-glucosaminyl-(1-&gt;3)]-beta-D-galactosyl-(1-&gt;4)-beta-D-glucosyl-(1&lt;-&gt;1')-N-acyl-sphing-4-enine + GDP + H(+). The enzyme catalyses N-acetyl-alpha-neuraminosyl-(2-&gt;3)-beta-D-galactosyl-(1-&gt;3)-N-acetyl-beta-D-glucosaminyl-(1-&gt;3)-beta-D-galactosyl-(1-&gt;4)-beta-D-glucosyl-(1&lt;-&gt;1')-N-acyl-sphing-4-enine + GDP-beta-L-fucose = N-acetyl-alpha-neuraminosyl-(2-&gt;3)-beta-D-galactosyl-(1-&gt;3)-alpha-L-fucosyl-(1-&gt;4)-[N-acetyl-beta-D-glucosaminyl-(1-&gt;3)]-beta-D-galactosyl-(1-&gt;4)-beta-D-glucosyl-(1&lt;-&gt;1')-N-acyl-sphing-4-enine + GDP + H(+). The catalysed reaction is beta-D-galactosyl-(1-&gt;3)-N-acetyl-D-glucosamine + GDP-beta-L-fucose = beta-D-galactosyl-(1-&gt;3)-[alpha-L-fucosyl-(1-&gt;4)]-N-acetyl-D-glucosamine + GDP + H(+). It catalyses the reaction alpha-L-Fuc-(1-&gt;2)-beta-D-Gal-(1-&gt;3)-D-GlcNAc + GDP-beta-L-fucose = alpha-L-Fuc-(1-&gt;2)-beta-D-Gal-(1-&gt;3)-[alpha-L-Fuc-(1-&gt;4)]-D-GlcNAc + GDP + H(+). It carries out the reaction alpha-L-Fuc-(1-&gt;2)-beta-D-Gal-(1-&gt;4)-D-GlcNAc + GDP-beta-L-fucose = alpha-L-Fuc-(1-&gt;2)-beta-D-Gal-(1-&gt;4)-[alpha-L-Fuc-(1-&gt;3)]-D-GlcNAc + GDP + H(+). The enzyme catalyses beta-D-galactosyl-(1-&gt;4)-N-acetyl-D-glucosamine + GDP-beta-L-fucose = beta-D-galactosyl-(1-&gt;4)-[alpha-L-fucosyl-(1-&gt;3)]-N-acetyl-D-glucosamine + GDP + H(+). The catalysed reaction is lactose + GDP-beta-L-fucose = beta-D-galactosyl-(1-&gt;4)-[alpha-L-fucosyl-(1-&gt;3)]-D-glucose + GDP + H(+). It catalyses the reaction an alpha-Neu5Ac-(2-&gt;3)-beta-D-Gal-(1-&gt;3)-D-GlcNAc derivative + GDP-beta-L-fucose = an alpha-Neu5Ac-(2-&gt;3)-beta-D-Gal-(1-&gt;3)-[alpha-L-Fuc-(1-&gt;4)]-beta-D-GlcNAc derivative + GDP + H(+). It functions in the pathway protein modification; protein glycosylation. In terms of biological role, catalyzes the transfer of L-fucose, from a guanosine diphosphate-beta-L-fucose, to both the subterminal N-acetyl glucosamine (GlcNAc) of type 1 chain (beta-D-Gal-(1-&gt;3)-beta-D-GlcNAc) glycolipids and oligosaccharides via an alpha(1,4) linkage, and the subterminal glucose (Glc) or GlcNAc of type 2 chain (beta-D-Gal-(1-&gt;4)-beta-D-GlcNAc) oligosaccharides via an alpha(1,3) linkage, independently of the presence of terminal alpha-L-fucosyl-(1,2) moieties on the terminal galactose of these acceptors. Through its catalytic activity, participates in the synthesis of antigens of the Lewis blood group system, i.e. Lewis a (Le(a)), lewis b (Le(b)), Lewis x/SSEA-1 (Le(x)) and lewis y (Le(y)) antigens. Also catalyzes the transfer of L-fucose to subterminal GlcNAc of sialyl- and disialyl-lactotetraosylceramide to produce sialyl Lewis a (sLe(a)) and disialyl Lewis a via an alpha(1,4) linkage and therefore may regulate cell surface sLe(a) expression and consequently regulates adhesive properties to E-selectin, cell proliferation and migration. Catalyzes the transfer of an L-fucose to 3'-sialyl-N-acetyllactosamine by an alpha(1,3) linkage, which allows the formation of sialyl-Lewis x structure and therefore may regulate the sialyl-Lewis x surface antigen expression and consequently adhesive properties to E-selectin. Prefers type 1 chain over type 2 acceptors. Type 1 tetrasaccharide is a better acceptor than type 1 disaccharide suggesting that a beta anomeric configuration of GlcNAc in the substrate is preferred. Lewis-positive (Le(+)) individuals have an active enzyme while Lewis-negative (Le(-)) individuals have an inactive enzyme. The protein is 3-galactosyl-N-acetylglucosaminide 4-alpha-L-fucosyltransferase FUT3 of Homo sapiens (Human).